We begin with the raw amino-acid sequence, 1035 residues long: Beta-galactosidase (1035 aa).

Substrate-binding residues include Asn-109 and Asp-208. Asp-208 serves as a coordination point for Na(+). Mg(2+)-binding residues include Glu-424, His-426, and Glu-469. Substrate-binding positions include Glu-469 and 545–548 (EYAH). The active-site Proton donor is Glu-469. Glu-545 functions as the Nucleophile in the catalytic mechanism. Asn-605 contacts Mg(2+). Positions 609 and 612 each coordinate Na(+). Residues Asn-612 and Trp-1011 each contribute to the substrate site.

This sequence belongs to the glycosyl hydrolase 2 family. In terms of assembly, homotetramer. Mg(2+) serves as cofactor. Na(+) is required as a cofactor.

It carries out the reaction Hydrolysis of terminal non-reducing beta-D-galactose residues in beta-D-galactosides.. The chain is Beta-galactosidase from Klebsiella pneumoniae (strain 342).